Reading from the N-terminus, the 456-residue chain is Dihydroorotase (456 aa).

His60 and His62 together coordinate Zn(2+). Residues 62–64 (HFR) and Asn94 contribute to the substrate site. 4 residues coordinate Zn(2+): Glu146, His180, His234, and Asp313. Residue Asp313 is part of the active site. His317 is a substrate binding site.

The protein belongs to the metallo-dependent hydrolases superfamily. DHOase family. Class I DHOase subfamily. The cofactor is Zn(2+).

It carries out the reaction (S)-dihydroorotate + H2O = N-carbamoyl-L-aspartate + H(+). The protein operates within pyrimidine metabolism; UMP biosynthesis via de novo pathway; (S)-dihydroorotate from bicarbonate: step 3/3. In terms of biological role, catalyzes the reversible cyclization of carbamoyl aspartate to dihydroorotate. The protein is Dihydroorotase of Methanosarcina mazei (strain ATCC BAA-159 / DSM 3647 / Goe1 / Go1 / JCM 11833 / OCM 88) (Methanosarcina frisia).